A 166-amino-acid polypeptide reads, in one-letter code: Peptidyl-prolyl cis-trans isomerase cyp18 (166 aa).

Residues 2–164 enclose the PPIase cyclophilin-type domain; it reads STVELNTSAG…QPVVIESAKI (163 aa).

It belongs to the cyclophilin-type PPIase family. As to quaternary structure, monomer.

Its subcellular location is the cytoplasm. It carries out the reaction [protein]-peptidylproline (omega=180) = [protein]-peptidylproline (omega=0). Its activity is regulated as follows. Inhibition by cyclosporin A with a Ki of 21 mu-mol. PPIases accelerate the folding of proteins. It catalyzes the cis-trans isomerization of proline imidic peptide bonds in oligopeptides. The chain is Peptidyl-prolyl cis-trans isomerase cyp18 from Streptomyces antibioticus.